A 1327-amino-acid polypeptide reads, in one-letter code: uncharacterized protein (1327 aa).

Residue 884 to 885 coordinates substrate; sequence WD. E1023 (proton donor) is an active-site residue. 1143–1144 provides a ligand contact to substrate; that stretch reads KQ.

It in the N-terminal section; belongs to the trehalose phosphatase family. The protein in the C-terminal section; belongs to the glycosyl hydrolase 65 family.

This is an uncharacterized protein from Mycobacterium tuberculosis (strain CDC 1551 / Oshkosh).